Consider the following 228-residue polypeptide: Endonuclease V (228 aa).

Mg(2+) is bound by residues Asp-43 and Asp-109.

The protein belongs to the endonuclease V family. It depends on Mg(2+) as a cofactor.

It localises to the cytoplasm. It catalyses the reaction Endonucleolytic cleavage at apurinic or apyrimidinic sites to products with a 5'-phosphate.. In terms of biological role, DNA repair enzyme involved in the repair of deaminated bases. Selectively cleaves double-stranded DNA at the second phosphodiester bond 3' to a deoxyinosine leaving behind the intact lesion on the nicked DNA. This is Endonuclease V from Dictyoglomus thermophilum (strain ATCC 35947 / DSM 3960 / H-6-12).